Consider the following 529-residue polypeptide: MGSSRAPWMGRVGGHGMMALLLAGLLLPGTLAKSIGTFSDPCKDPMRITSPNDPCLTGKGDSSGFSSYSGSSSSGSSISSARSSGGGSSGSSSGSSIAQGGSAGSFKPGTGYSQVSYSSGSGSSLQGASGSSQLGSSSSHSGSSGSHSGSSSSHSSSSSSFQFSSSSFQVGNGSALPTNDNSYRGILNPSQPGQSSSSSQTFGVSSSGQSVSSNQRPCSSDIPDSPCSGGPIVSHSGPYIPSSHSVSGGQRPVVVVVDQHGSGAPGVVQGPPCSNGGLPGKPCPPITSVDKSYGGYEVVGGSSDSYLVPGMTYSKGKIYPVGYFTKENPVKGSPGVPSFAAGPPISEGKYFSSNPIIPSQSAASSAIAFQPVGTGGVQLCGGGSTGSKGPCSPSSSRVPSSSSISSSSGLPYHPCGSASQSPCSPPGTGSFSSSSSSQSSGKIILQPCGSKSSSSGHPCMSVSSLTLTGGPDGSPHPDPSAGAKPCGSSSAGKIPCRSIRDILAQVKPLGPQLADPEVFLPQGELLDSP.

The N-terminal stretch at 1–32 (MGSSRAPWMGRVGGHGMMALLLAGLLLPGTLA) is a signal peptide. Disordered stretches follow at residues 38-248 (FSDP…SVSG) and 383-492 (GSTG…SSAG). 6 stretches are compositionally biased toward low complexity: residues 58–83 (GKGDSSGFSSYSGSSSSGSSISSARS), 90–100 (GSSSGSSIAQG), 111–175 (GYSQ…NGSA), 189–231 (PSQP…SGGP), 392–408 (SPSSSRVPSSSSISSSS), and 426–441 (PGTGSFSSSSSSQSSG). N-linked (GlcNAc...) asparagine glycosylation is present at Asn172. Positions 449-467 (GSKSSSSGHPCMSVSSLTL) are enriched in polar residues.

The protein resides in the secreted. Functionally, important for the epidermal barrier integrity. This is Corneodesmosin (CDSN) from Pan troglodytes (Chimpanzee).